A 1480-amino-acid polypeptide reads, in one-letter code: Cystic fibrosis transmembrane conductance regulator (1480 aa).

The Cytoplasmic segment spans residues 1-77; the sequence is MQRSPLEKAS…KLINALRRCF (77 aa). Residues 78–98 traverse the membrane as a helical segment; sequence FWRFMFYGIFLYLGEVTKAVQ. Residues 81 to 365 form the ABC transmembrane type-1 1 domain; that stretch reads FMFYGIFLYL…WAVQTWYDSL (285 aa). Over 99-122 the chain is Extracellular; sequence PLLLGRIIASYDPDNKEERSIAIY. A helical membrane pass occupies residues 123–146; it reads LGIGLCLLFIVRTLLLHPAIFGLH. The Cytoplasmic segment spans residues 147–195; that stretch reads HIGMQMRIAMFSLIYKKTLKLSSRVLDKISIGQLVSLLSNNLNKFDEGL. Residues 196-216 traverse the membrane as a helical segment; the sequence is ALAHFVWIAPLQVALLMGLIW. Over 217 to 222 the chain is Extracellular; it reads ELLQAS. A helical transmembrane segment spans residues 223–243; the sequence is AFCGLGFLIVLALFQAGLGRM. Residues 244–298 are Cytoplasmic-facing; that stretch reads MMKYRDQRAGKINERLVITSEMIENIQSVKAYCWEEAMEKMIENLRQTELKLTRK. The helical transmembrane segment at 299–319 threads the bilayer; sequence AAYVRYFNSSAFFFSGFFVVF. The Extracellular portion of the chain corresponds to 320–339; sequence LSVLPYALIKGIVLRKIFTT. The chain crosses the membrane as a helical span at residues 340 to 358; sequence ISFCIVLRMAVTRQFPWAV. Topologically, residues 359 to 858 are cytoplasmic; sequence QTWYDSLGAI…YLRYITVHKS (500 aa). ATP-binding positions include tryptophan 401, serine 434, 458-465, and glutamine 493; that span reads GSTGAGKT. The region spanning 423 to 646 is the ABC transporter 1 domain; sequence NGDDSLFFSN…RPDFSSKLMG (224 aa). Cysteine 524 carries S-palmitoyl cysteine lipidation. Serine 549 and serine 660 each carry phosphoserine. The tract at residues 654–831 is disordered R region; the sequence is SAERRNSILT…EEINEEDLKE (178 aa). Position 670 is a phosphoserine; by PKA (serine 670). A Glycyl lysine isopeptide (Lys-Gly) (interchain with G-Cter in ubiquitin) cross-link involves residue lysine 688. Residues serine 700 and serine 712 each carry the phosphoserine modification. Threonine 717 is modified (phosphothreonine). Phosphoserine occurs at positions 737, 753, 768, 790, 795, and 813. A helical transmembrane segment spans residues 859–879; that stretch reads LIFVLIWCLVIFLAEVAASLV. Positions 859 to 1155 constitute an ABC transmembrane type-1 2 domain; sequence LIFVLIWCLV…AVNSSIDVDS (297 aa). Over 880–918 the chain is Extracellular; that stretch reads VLWLLGNTPLQDKGNSTHSRNNSYAVIITSTSSYYVFYI. N-linked (GlcNAc...) asparagine glycosylation is found at asparagine 894 and asparagine 900. The discontinuously helical transmembrane segment at 919–939 threads the bilayer; that stretch reads YVGVADTLLAMGFFRGLPLVH. Residues 940 to 990 lie on the Cytoplasmic side of the membrane; it reads TLITVSKILHNKMLHSVLQAPMSTLNTLKAGGILNRFSKDIAILDDLLPLT. Residues 991–1011 traverse the membrane as a helical segment; that stretch reads IFDFIQLLLIVIGAIAVVAVL. Residues 1012-1013 lie on the Extracellular side of the membrane; the sequence is QP. A helical transmembrane segment spans residues 1014–1034; sequence YIFVATVPVIVAFIMLRAYFL. The Cytoplasmic segment spans residues 1035–1095; that stretch reads QTSQQLKQLE…TANWFLYLST (61 aa). Residues 1096-1116 traverse the membrane as a helical segment; the sequence is LRWFQMRIEMIFVIFFIAVTF. Over 1117 to 1130 the chain is Extracellular; sequence ISILTTGEGEGRVG. Residues 1131-1151 traverse the membrane as a helical segment; that stretch reads IILTLAMNIMSTLQWAVNSSI. The Cytoplasmic segment spans residues 1152–1480; the sequence is DVDSLMRSVS…TEEEVQDTRL (329 aa). Residues 1210–1443 form the ABC transporter 2 domain; sequence MTVKDLTAKY…RSLFQQAISP (234 aa). Residues tyrosine 1219 and 1244 to 1251 each bind ATP; that span reads GRTGSGKS. The segment at 1386–1480 is interaction with GORASP2; it reads RTLKQAFADC…TEEEVQDTRL (95 aa). Residue cysteine 1395 is the site of S-palmitoyl cysteine attachment. Phosphoserine occurs at positions 1444 and 1456. Positions 1452–1480 are disordered; it reads HRNSSKCKSKPQIAALKEETEEEVQDTRL. Positions 1470–1480 are enriched in acidic residues; it reads ETEEEVQDTRL. The PDZ-binding signature appears at 1478-1480; sequence TRL.

It belongs to the ABC transporter superfamily. ABCC family. CFTR transporter (TC 3.A.1.202) subfamily. As to quaternary structure, monomer; does not require oligomerization for channel activity. May form oligomers in the membrane. Interacts with SLC26A3, SLC26A6 and NHERF1. Interacts with SHANK2. Interacts with MYO6. Interacts (via C-terminus) with GOPC (via PDZ domain); this promotes CFTR internalization and thereby decreases channel activity. Interacts with SLC4A7 through NHERF1. Found in a complex with MYO5B and RAB11A. Interacts with ANO1. Interacts with SLC26A8. Interacts with AHCYL1; the interaction increases CFTR activity. Interacts with CSE1L. The core-glycosylated form interacts with GORASP2 (via PDZ GRASP-type 1 domain) in respone to ER stress. Interacts with MARCHF2; the interaction leads to CFTR ubiqtuitination and degradation. Interacts with ADGRG2. N-glycosylated. In terms of processing, phosphorylated; cAMP treatment promotes phosphorylation and activates the channel. Dephosphorylation decreases the ATPase activity (in vitro). Phosphorylation at PKA sites activates the channel. Phosphorylation at PKC sites enhances the response to phosphorylation by PKA. Phosphorylated by AMPK; this inhibits channel activity. Post-translationally, ubiquitinated, leading to its degradation in the lysosome. Deubiquitination by USP10 in early endosomes enhances its endocytic recycling to the cell membrane. Ubiquitinated by RNF185 during ER stress. Ubiquitinated by MARCHF2.

Its subcellular location is the apical cell membrane. It localises to the early endosome membrane. It is found in the cell membrane. The protein resides in the recycling endosome membrane. The protein localises to the endoplasmic reticulum membrane. Its subcellular location is the nucleus. The catalysed reaction is ATP + H2O + closed Cl(-) channel = ADP + phosphate + open Cl(-) channel.. It carries out the reaction chloride(in) = chloride(out). The enzyme catalyses hydrogencarbonate(in) = hydrogencarbonate(out). It catalyses the reaction ATP + H2O = ADP + phosphate + H(+). Epithelial ion channel that plays an important role in the regulation of epithelial ion and water transport and fluid homeostasis. Mediates the transport of chloride ions across the cell membrane. Possesses an intrinsic ATPase activity and utilizes ATP to gate its channel; the passive flow of anions through the channel is gated by cycles of ATP binding and hydrolysis by the ATP-binding domains. The ion channel is also permeable to HCO(3)(-); selectivity depends on the extracellular chloride concentration. Exerts its function also by modulating the activity of other ion channels and transporters. Contributes to the regulation of the pH and the ion content of the epithelial fluid layer. Modulates the activity of the epithelial sodium channel (ENaC) complex, in part by regulating the cell surface expression of the ENaC complex. May regulate bicarbonate secretion and salvage in epithelial cells by regulating the transporter SLC4A7. Can inhibit the chloride channel activity of ANO1. Plays a role in the chloride and bicarbonate homeostasis during sperm epididymal maturation and capacitation. In Pongo abelii (Sumatran orangutan), this protein is Cystic fibrosis transmembrane conductance regulator.